Reading from the N-terminus, the 152-residue chain is Nucleoside diphosphate kinase (152 aa).

Lysine 11, phenylalanine 59, arginine 87, threonine 93, arginine 104, and asparagine 114 together coordinate ATP. Histidine 117 functions as the Pros-phosphohistidine intermediate in the catalytic mechanism.

It belongs to the NDK family. As to quaternary structure, homotetramer. The cofactor is Mg(2+).

The protein localises to the cytoplasm. The catalysed reaction is a 2'-deoxyribonucleoside 5'-diphosphate + ATP = a 2'-deoxyribonucleoside 5'-triphosphate + ADP. It carries out the reaction a ribonucleoside 5'-diphosphate + ATP = a ribonucleoside 5'-triphosphate + ADP. Functionally, major role in the synthesis of nucleoside triphosphates other than ATP. The ATP gamma phosphate is transferred to the NDP beta phosphate via a ping-pong mechanism, using a phosphorylated active-site intermediate. In Prochlorococcus marinus (strain MIT 9301), this protein is Nucleoside diphosphate kinase.